Reading from the N-terminus, the 279-residue chain is Acetylglutamate kinase (279 aa).

Residues 64 to 65 (GG), Arg-86, and Asn-177 each bind substrate.

It belongs to the acetylglutamate kinase family. ArgB subfamily.

The protein localises to the cytoplasm. It catalyses the reaction N-acetyl-L-glutamate + ATP = N-acetyl-L-glutamyl 5-phosphate + ADP. It functions in the pathway amino-acid biosynthesis; L-arginine biosynthesis; N(2)-acetyl-L-ornithine from L-glutamate: step 2/4. In terms of biological role, catalyzes the ATP-dependent phosphorylation of N-acetyl-L-glutamate. This is Acetylglutamate kinase from Campylobacter jejuni subsp. jejuni serotype O:6 (strain 81116 / NCTC 11828).